Consider the following 454-residue polypeptide: tRNA modification GTPase MnmE (454 aa).

(6S)-5-formyl-5,6,7,8-tetrahydrofolate contacts are provided by Arg-23, Glu-80, and Lys-120. The region spanning 216–377 (GMKVVIAGRP…LRNHLKQSMG (162 aa)) is the TrmE-type G domain. Residue Asn-226 participates in K(+) binding. GTP is bound by residues 226–231 (NAGKSS), 245–251 (TDIAGTT), 270–273 (DTAG), 335–338 (NKAD), and 358–360 (SAR). Residue Ser-230 coordinates Mg(2+). 3 residues coordinate K(+): Thr-245, Ile-247, and Thr-250. A Mg(2+)-binding site is contributed by Thr-251. Residue Lys-454 participates in (6S)-5-formyl-5,6,7,8-tetrahydrofolate binding.

This sequence belongs to the TRAFAC class TrmE-Era-EngA-EngB-Septin-like GTPase superfamily. TrmE GTPase family. In terms of assembly, homodimer. Heterotetramer of two MnmE and two MnmG subunits. Requires K(+) as cofactor.

It localises to the cytoplasm. In terms of biological role, exhibits a very high intrinsic GTPase hydrolysis rate. Involved in the addition of a carboxymethylaminomethyl (cmnm) group at the wobble position (U34) of certain tRNAs, forming tRNA-cmnm(5)s(2)U34. This Escherichia coli O139:H28 (strain E24377A / ETEC) protein is tRNA modification GTPase MnmE.